We begin with the raw amino-acid sequence, 297 residues long: ER membrane protein complex subunit 2 (297 aa).

Position 2 is an N-acetylalanine (Ala2). TPR repeat units lie at residues 87 to 120, 155 to 188, and 192 to 225; these read HRVK…DPTN, QEAW…NPYN, and CQQY…NNRN. Position 255 is an N6-acetyllysine (Lys255).

It belongs to the EMC2 family. Component of the ER membrane protein complex (EMC).

The protein resides in the endoplasmic reticulum membrane. Part of the endoplasmic reticulum membrane protein complex (EMC) that enables the energy-independent insertion into endoplasmic reticulum membranes of newly synthesized membrane proteins. Preferentially accommodates proteins with transmembrane domains that are weakly hydrophobic or contain destabilizing features such as charged and aromatic residues. Involved in the cotranslational insertion of multi-pass membrane proteins in which stop-transfer membrane-anchor sequences become ER membrane spanning helices. It is also required for the post-translational insertion of tail-anchored/TA proteins in endoplasmic reticulum membranes. By mediating the proper cotranslational insertion of N-terminal transmembrane domains in an N-exo topology, with translocated N-terminus in the lumen of the ER, controls the topology of multi-pass membrane proteins like the G protein-coupled receptors. By regulating the insertion of various proteins in membranes, it is indirectly involved in many cellular processes. The polypeptide is ER membrane protein complex subunit 2 (Bos taurus (Bovine)).